The following is a 483-amino-acid chain: Myosin-binding protein H (483 aa).

Residues 1–15 are compositionally biased toward polar residues; that stretch reads MTGKATSEASVSTPE. The segment at 1-78 is disordered; it reads MTGKATSEAS…PEPPSEDVPS (78 aa). Phosphothreonine is present on residues threonine 2, threonine 6, and threonine 26. Low complexity predominate over residues 41 to 66; that stretch reads QEQAPEPQKPQAQDPAAPAASAMPAA. The 96-residue stretch at 79–174 folds into the Fibronectin type-III 1 domain; the sequence is APLRLTLEDV…LDQPVHIQEI (96 aa). An Ig-like C2-type 1 domain is found at 178 to 266; sequence PKIRVPRHLR…EGLEAKASID (89 aa). The Fibronectin type-III 2 domain occupies 275–370; sequence PPSSIKLLDV…TKELAHIHKA (96 aa). Residues 388–472 form the Ig-like C2-type 2 domain; the sequence is PSFTQPLADH…INVLGEASVD (85 aa).

The protein belongs to the immunoglobulin superfamily. MyBP family. Skeletal muscle. Expressed at low levels in heart ventricles.

In terms of biological role, binds to myosin; probably involved in interaction with thick myofilaments in the A-band. The sequence is that of Myosin-binding protein H (Mybph) from Mus musculus (Mouse).